Here is a 677-residue protein sequence, read N- to C-terminus: Mitochondrial 15S rRNA processing factor ppr3 (677 aa).

A mitochondrion-targeting transit peptide spans 1 to 43 (MFTEICGKLRTCIYKKVAFSRPLGCNLRQLPVFRDFHNSVSCL). PPR repeat units follow at residues 210–244 (SVYLLNILLHASAKHSTLEETLNVYNAYNQFQLKP), 245–279 (DNYTFVSLIIAYSLHKQIVKAFSLLSEMKRLKIEA), 280–314 (NTHVFNTYIAILYHERLYEQAWRLFDYMKFKSLQS), 317–351 (DDKTYSYMISVCTAERKVEKALNLYQEMQERPINP), 355–390 (SSRTIDAILRALARYPRYHSKFWSIFEELRAEQWKP), and 569–604 (DIHVYACAINGASVSNDFAFGYAVWLEYLHCKSYLP).

This sequence belongs to the CCM1 family. In terms of assembly, binds to mitochondrial small subunit 15S rRNA.

The protein localises to the mitochondrion. Regulates mitochondrial small subunit maturation by controlling 15S rRNA 5'-end processing. Localizes to the 5' precursor of the 15S rRNA in a position that is subsequently occupied by mS47 in the mature yeast mtSSU. Uses structure and sequence-specific RNA recognition, binding to a single-stranded region of the precursor and specifically recognizing bases -6 to -1. The exchange of Ccm1 for mS47 is coupled to the irreversible removal of precursor rRNA that is accompanied by conformational changes of the mitoribosomal proteins uS5m and mS26. These conformational changes signal completion of 5'-end rRNA processing through protection of the mature 5'-end of the 15S rRNA and stabilization of mS47. The removal of the 5' precursor together with the dissociation of Ccm1 may be catalyzed by the 5'-3' exoribonuclease Pet127. Involved in the specific removal of group I introns in mitochondrial encoded transcripts. The protein is Mitochondrial 15S rRNA processing factor ppr3 (dmr1) of Schizosaccharomyces japonicus (strain yFS275 / FY16936) (Fission yeast).